A 270-amino-acid chain; its full sequence is Formamidopyrimidine-DNA glycosylase (270 aa).

Residue Pro2 is the Schiff-base intermediate with DNA of the active site. The active-site Proton donor is Glu3. Lys58 serves as the catalytic Proton donor; for beta-elimination activity. DNA contacts are provided by His91, Arg110, and Arg151. Residues 236 to 270 form an FPG-type zinc finger; that stretch reads FVYGRGGEFCKSCGSTLREIRLGQRASVYCSRCQR. The active-site Proton donor; for delta-elimination activity is Arg260.

Belongs to the FPG family. As to quaternary structure, monomer. Zn(2+) serves as cofactor.

It carries out the reaction Hydrolysis of DNA containing ring-opened 7-methylguanine residues, releasing 2,6-diamino-4-hydroxy-5-(N-methyl)formamidopyrimidine.. The enzyme catalyses 2'-deoxyribonucleotide-(2'-deoxyribose 5'-phosphate)-2'-deoxyribonucleotide-DNA = a 3'-end 2'-deoxyribonucleotide-(2,3-dehydro-2,3-deoxyribose 5'-phosphate)-DNA + a 5'-end 5'-phospho-2'-deoxyribonucleoside-DNA + H(+). Functionally, involved in base excision repair of DNA damaged by oxidation or by mutagenic agents. Acts as a DNA glycosylase that recognizes and removes damaged bases. Has a preference for oxidized purines, such as 7,8-dihydro-8-oxoguanine (8-oxoG). Has AP (apurinic/apyrimidinic) lyase activity and introduces nicks in the DNA strand. Cleaves the DNA backbone by beta-delta elimination to generate a single-strand break at the site of the removed base with both 3'- and 5'-phosphates. In Stutzerimonas stutzeri (strain A1501) (Pseudomonas stutzeri), this protein is Formamidopyrimidine-DNA glycosylase.